The sequence spans 558 residues: Ribonuclease J (558 aa).

Zn(2+)-binding residues include His81, His83, Asp85, His86, His148, and Asp170. Position 371–375 (371–375) interacts with substrate; it reads HVSGH. His397 provides a ligand contact to Zn(2+).

It belongs to the metallo-beta-lactamase superfamily. RNA-metabolizing metallo-beta-lactamase-like family. Bacterial RNase J subfamily. Homodimer. Zn(2+) serves as cofactor.

The protein resides in the cytoplasm. Its function is as follows. An RNase that has endonuclease and 5'-3' exonuclease activity. The 5'-exonuclease activity acts on 5'-monophosphate but not 5'-triphosphate ends. Endonuclease activity can cleave within 4 nucleotides of the 5'-end of a triphosphorylated RNA. Plays the major role in pre-23S rRNA maturation, and a minor role in processing of pre-5S and pre-16S rRNA. The sequence is that of Ribonuclease J from Mycolicibacterium smegmatis (strain ATCC 700084 / mc(2)155) (Mycobacterium smegmatis).